Reading from the N-terminus, the 60-residue chain is Mastoparan-VT1 (60 aa).

The signal sequence occupies residues 1–25 (MKNTILILFTAFIALLGFFGMSAEA). Positions 26 to 45 (LADLKADPLAGPNPDADPEA) are excised as a propeptide. 3 AXPX repeats span residues 31 to 34 (ADPL), 35 to 38 (AGPN), and 41 to 44 (ADPE). Leucine amide is present on Leu-59.

The protein belongs to the MCD family. Mastoparan subfamily. Expressed by the venom gland.

The protein resides in the secreted. Functionally, antimicrobial peptide with activities against Gram-negative and Gram-positive bacteria and the fungi C.albicans and C.parapsilosis. Exhibits little hemolytic activity against washed human erythrocytes. Also acts as a mast cell degranulating peptide. Its mast cell degranulation activity may be related to the activation of G-protein coupled receptors in mast cells as well as interaction with other proteins located in cell endosomal membranes in the mast cells. In terms of biological role, antimicrobial peptide with activities against Gram-negative and Gram-positive bacteria and the fungi C.albicans and C.parapsilosis. Exhibits little hemolytic activity against washed human erythrocytes. Also acts as a mast cell degranulating peptide. This is Mastoparan-VT1 from Vespa tropica (Greater banded hornet).